Here is a 122-residue protein sequence, read N- to C-terminus: Large ribosomal subunit protein uL14 (122 aa).

Belongs to the universal ribosomal protein uL14 family. In terms of assembly, part of the 50S ribosomal subunit. Forms a cluster with proteins L3 and L19. In the 70S ribosome, L14 and L19 interact and together make contacts with the 16S rRNA in bridges B5 and B8.

In terms of biological role, binds to 23S rRNA. Forms part of two intersubunit bridges in the 70S ribosome. This chain is Large ribosomal subunit protein uL14, found in Staphylococcus carnosus (strain TM300).